Consider the following 556-residue polypeptide: MDKRHNPSRRIIAPHGSKLSCKSWTTEAPMRMLMNNLHPDVAERPEDLVVYGGIGRAARDWECYDKIIEVLQRLEEDETLLVQSGKPVGVFKTHNNAPRVIIANSNLVPHWANWEHFNELDKKGLAMYGQMTAGSWIYIGSQGIVQGTYETFVAMAKQHFGGSSAGKWILTGGLGGMGGAQPLAGTMAGYSVLTCEVDETRIDFRLRTRYVDKKATSLDEALAMIDEANKSGKPVSVGLLANAADVFAELVERGITPDVVTDQTSAHDPLNGYLPQGWSLEQAADMRKKDEAAVVKAAKQSMAVQVKAMLALQAAGAATTDYGNNIRQMAFEEGVENAFDFPGFVPAYVRPLFCEGIGPFRWAALSGDPEDIYKTDAKVKELIPDNPHLHNWLDMARERIAFQGLPSRICWVGLKDRARLALAFNEMVKNGELSAPVVIGRDHLDSGSVASPNRETESMLDGSDAVSDWPLMNALLNTASGATWVSLHHGGGVGMGFSQHSGVVIVADGTDDAAARLGRVLWNDPATGVMRHADAGYDIAKNCAKEQGLDLPMLEK.

Residues 52–53, Gln-130, 176–178, Glu-196, Arg-201, 242–243, 263–267, 273–274, and Tyr-322 each bind NAD(+); these read GG, GMG, NA, QTSAH, and YL. Cys-410 is a catalytic residue. NAD(+) is bound at residue Gly-492.

It belongs to the urocanase family. The cofactor is NAD(+).

The protein resides in the cytoplasm. The catalysed reaction is 4-imidazolone-5-propanoate = trans-urocanate + H2O. It participates in amino-acid degradation; L-histidine degradation into L-glutamate; N-formimidoyl-L-glutamate from L-histidine: step 2/3. In terms of biological role, catalyzes the conversion of urocanate to 4-imidazolone-5-propionate. The protein is Urocanate hydratase of Shewanella woodyi (strain ATCC 51908 / MS32).